A 737-amino-acid chain; its full sequence is Elongation factor 2 (737 aa).

The 245-residue stretch at 18–262 (TRVRNIGIIA…TVIKFVPNPR (245 aa)) folds into the tr-type G domain. GTP is bound by residues 27 to 34 (AHVDHGKT), 93 to 97 (DTPGH), and 147 to 150 (NKVD). His604 carries the post-translational modification Diphthamide.

It belongs to the TRAFAC class translation factor GTPase superfamily. Classic translation factor GTPase family. EF-G/EF-2 subfamily.

The protein resides in the cytoplasm. Its function is as follows. Catalyzes the GTP-dependent ribosomal translocation step during translation elongation. During this step, the ribosome changes from the pre-translocational (PRE) to the post-translocational (POST) state as the newly formed A-site-bound peptidyl-tRNA and P-site-bound deacylated tRNA move to the P and E sites, respectively. Catalyzes the coordinated movement of the two tRNA molecules, the mRNA and conformational changes in the ribosome. This is Elongation factor 2 (fusA) from Sulfurisphaera tokodaii (strain DSM 16993 / JCM 10545 / NBRC 100140 / 7) (Sulfolobus tokodaii).